Reading from the N-terminus, the 617-residue chain is Neurosecretory protein VGF (617 aa).

The signal sequence occupies residues 1 to 23 (MKTFTLPASVLFCFLLLIRGLGA). 4 disordered regions span residues 29–75 (SDVY…GELF), 94–113 (PASPPAVPAGSQQGTPEEAA), 121–157 (VRSQTHSLPASEIQASAVAPPRPQTQDNDPEADDRSE), and 169–192 (LRDFSPSNAKRQQETAAAETETRT). Basic and acidic residues predominate over residues 48-64 (AVSRPKDDSVPEVRAAR). Positions 148 to 157 (NDPEADDRSE) are enriched in acidic residues. At Gln180 the chain carries Pyrrolidone carboxylic acid. A compositionally biased stretch (low complexity) spans 182–192 (ETAAAETETRT). Residue Gln313 is modified to Pyrrolidone carboxylic acid. Positions 348 to 603 (DLGGRGLQET…AEERRLQEQE (256 aa)) are disordered. A compositionally biased stretch (acidic residues) spans 378–397 (EDEVGEEDEEAAEAEAEAEE). The span at 418 to 436 (AEDKRSQEEAPGHRRKDAE) shows a compositional bias: basic and acidic residues. Ser423 carries the post-translational modification Phosphoserine. Over residues 437–452 (GTEEGGEEDDDDEEMD) the composition is skewed to acidic residues. Residues 491–501 (PPEPVPPPRAA) are compositionally biased toward pro residues. A compositionally biased stretch (basic and acidic residues) spans 577–601 (HHPDLEAQARRAQEEADAEERRLQE).

As to quaternary structure, interacts with HSPA8 on cell membrane. Interacts with C3AR1. Interacts with C1QBP. Multiple peptides are derived from VGF, with activities in synaptic plasticity, antidepression, penile erection, autonomic activation, and increases in energy expenditure. Central and peripheral nervous systems, synthesized exclusively in neuronal and neuroendocrine cells. VGF and several of the derived peptides are present in the brain.

It localises to the secreted. The protein resides in the cytoplasmic vesicle. The protein localises to the secretory vesicle. In terms of biological role, secreted polyprotein that is packaged and proteolytically processed by prohormone convertases PCSK1 and PCSK2 in a cell-type-specific manner. VGF and peptides derived from its processing play many roles in neurogenesis and neuroplasticity associated with learning, memory, depression and chronic pain. Its function is as follows. Plays a role in the control of body fluid homeostasis by regulating vasopressin release. Suppresses presynaptic glutamatergic neurons connected to vasopressin neurons. Functionally, plays a role in the control of body fluid homeostasis by regulating vasopressin release. Activates GABAergic interneurons which are inhibitory neurons of the nervous system and thereby suppresses presynaptic glutamatergic neurons. Also stimulates feeding behavior in an orexin-dependent manner in the hypothalamus. Functions as a positive regulator for the activation of orexin neurons resulting in elevated gastric acid secretion and gastric emptying. Secreted multifunctional neuropeptide that binds to different cell receptors and thereby plays multiple physiological roles including modulation of energy expenditure, pain, response to stress, gastric regulation, glucose homeostasis as well as lipolysis. Activates the G-protein-coupled receptor C3AR1 via a folding-upon-binding mechanism leading to enhanced lipolysis in adipocytes. Interacts with C1QBP receptor in macrophages and microglia causing increased levels of intracellular calcium and hypersensitivity. In terms of biological role, plays a role in the regulation of memory formation and depression-related behaviors potentially by influencing synaptic plasticity and neurogenesis. Induces acute and transient activation of the NTRK2/TRKB receptor and subsequent CREB phosphorylation. Also induces insulin secretion in insulinoma cells by increasing intracellular calcium mobilization. This chain is Neurosecretory protein VGF (Vgf), found in Rattus norvegicus (Rat).